A 208-amino-acid chain; its full sequence is Large ribosomal subunit protein eL13 (208 aa).

This sequence belongs to the eukaryotic ribosomal protein eL13 family.

The sequence is that of Large ribosomal subunit protein eL13 (RPL13) from Chlamydomonas sp. (strain W80).